The chain runs to 248 residues: Clathrin light chain A (248 aa).

A disordered region spans residues 1–92 (MAELDPFGAP…YYQESNGPTD (92 aa)). Over residues 13-25 (APGGPALGNGVAG) the composition is skewed to gly residues. Over residues 61–71 (GPQPHGEPPGG) the composition is skewed to pro residues. Residues 100–162 (VDRLQSEPES…QLQKTKANNR (63 aa)) are involved in binding clathrin heavy chain. A phosphoserine mark is found at Ser105 and Ser206. N6-acetyllysine is present on Lys223. Ser236 bears the Phosphoserine mark. Position 242 is an N6-acetyllysine (Lys242).

Belongs to the clathrin light chain family. In terms of assembly, clathrin coats are formed from molecules containing 3 heavy chains and 3 light chains. Interacts with CALY; the interaction stimulates clathrin self-assembly and clathrin-mediated endocytosis. Interacts with CKAP5 and TACC3 forming the TACC3/ch-TOG/clathrin complex located at spindle inter-microtubules bridges; the complex implicates clathrin triskelions.

Its subcellular location is the cytoplasmic vesicle membrane. The protein resides in the membrane. The protein localises to the coated pit. It is found in the cytoplasm. It localises to the cytoskeleton. Its subcellular location is the spindle. Its function is as follows. Clathrin is the major protein of the polyhedral coat of coated pits and vesicles. Acts as a component of the TACC3/ch-TOG/clathrin complex proposed to contribute to stabilization of kinetochore fibers of the mitotic spindle by acting as inter-microtubule bridge. This is Clathrin light chain A (CLTA) from Homo sapiens (Human).